Reading from the N-terminus, the 354-residue chain is Deoxyribonuclease-2-beta (354 aa).

Residues 1 to 22 form the signal peptide; it reads MTAKPLRTVLSLLFFALSGVLG. N-linked (GlcNAc...) asparagine glycosylation is found at Asn70, Asn77, Asn95, Asn98, Asn114, Asn129, Asn208, Asn271, and Asn319.

Belongs to the DNase II family. Highly expressed in the eye lens. Detected in liver, but not in the other tissues tested.

The protein localises to the lysosome. The enzyme catalyses Endonucleolytic cleavage to nucleoside 3'-phosphates and 3'-phosphooligonucleotide end-products.. Hydrolyzes DNA under acidic conditions. Does not require divalent cations for activity. Participates in the degradation of nuclear DNA during lens cell differentiation. The sequence is that of Deoxyribonuclease-2-beta (Dnase2b) from Mus musculus (Mouse).